We begin with the raw amino-acid sequence, 467 residues long: Zinc finger protein mex-6 (467 aa).

2 stretches are compositionally biased toward low complexity: residues M1–Q22 and S179–S195. 2 disordered regions span residues M1–P35 and T163–S209. The residue at position 190 (T190) is a Phosphothreonine. Basic and acidic residues predominate over residues R196–R207. 2 consecutive C3H1-type zinc fingers follow at residues N273–K302 and K317–D347. The interval I425–F451 is disordered. The residue at position 457 (S457) is a Phosphoserine.

In terms of assembly, interacts (probably when phosphorylated on Thr-190) with plk-1 (via POLO box domain) and plk-2 (via POLO box domain). In terms of processing, phosphorylation on Ser-457 by par-1 promotes localization of the protein to the anterior cytoplasm of the zygote.

The protein resides in the cytoplasm. In terms of biological role, functions with mex-5 to affect embryonic viability, establish soma germline asymmetry in embryos and establish plk-1, pie-1, mex-1, and pos-1 asymmetry in embryos. Also affects formation of intestinal cells. The protein is Zinc finger protein mex-6 (mex-6) of Caenorhabditis elegans.